We begin with the raw amino-acid sequence, 122 residues long: Glycine cleavage system H protein (122 aa).

Residues 19–101 (VATVGITDYA…QGKAWFFKIK (83 aa)) form the Lipoyl-binding domain. Position 60 is an N6-lipoyllysine (Lys60).

It belongs to the GcvH family. As to quaternary structure, the glycine cleavage system is composed of four proteins: P, T, L and H. The cofactor is (R)-lipoate.

Functionally, the glycine cleavage system catalyzes the degradation of glycine. The H protein shuttles the methylamine group of glycine from the P protein to the T protein. This chain is Glycine cleavage system H protein, found in Bradyrhizobium diazoefficiens (strain JCM 10833 / BCRC 13528 / IAM 13628 / NBRC 14792 / USDA 110).